A 489-amino-acid polypeptide reads, in one-letter code: Glycogen synthase (489 aa).

K18 is an ADP-alpha-D-glucose binding site.

Belongs to the glycosyltransferase 1 family. Bacterial/plant glycogen synthase subfamily.

It carries out the reaction [(1-&gt;4)-alpha-D-glucosyl](n) + ADP-alpha-D-glucose = [(1-&gt;4)-alpha-D-glucosyl](n+1) + ADP + H(+). Its pathway is glycan biosynthesis; glycogen biosynthesis. Functionally, synthesizes alpha-1,4-glucan chains using ADP-glucose. The protein is Glycogen synthase of Rhodopseudomonas palustris (strain BisB18).